Here is a 425-residue protein sequence, read N- to C-terminus: UDP-N-acetylglucosamine 1-carboxyvinyltransferase (425 aa).

23-24 is a phosphoenolpyruvate binding site; that stretch reads KN. Arginine 100 serves as a coordination point for UDP-N-acetyl-alpha-D-glucosamine. The active-site Proton donor is the cysteine 124. Cysteine 124 is modified (2-(S-cysteinyl)pyruvic acid O-phosphothioketal). The UDP-N-acetyl-alpha-D-glucosamine site is built by aspartate 313 and isoleucine 335.

This sequence belongs to the EPSP synthase family. MurA subfamily.

The protein localises to the cytoplasm. The catalysed reaction is phosphoenolpyruvate + UDP-N-acetyl-alpha-D-glucosamine = UDP-N-acetyl-3-O-(1-carboxyvinyl)-alpha-D-glucosamine + phosphate. It functions in the pathway cell wall biogenesis; peptidoglycan biosynthesis. Functionally, cell wall formation. Adds enolpyruvyl to UDP-N-acetylglucosamine. This chain is UDP-N-acetylglucosamine 1-carboxyvinyltransferase, found in Wolbachia pipientis wMel.